A 323-amino-acid polypeptide reads, in one-letter code: tRNA U34 carboxymethyltransferase (323 aa).

Carboxy-S-adenosyl-L-methionine-binding positions include lysine 91, tryptophan 105, lysine 110, glycine 130, 181 to 182 (IE), methionine 196, tyrosine 200, and arginine 315.

Belongs to the class I-like SAM-binding methyltransferase superfamily. CmoB family. As to quaternary structure, homotetramer.

The enzyme catalyses carboxy-S-adenosyl-L-methionine + 5-hydroxyuridine(34) in tRNA = 5-carboxymethoxyuridine(34) in tRNA + S-adenosyl-L-homocysteine + H(+). Functionally, catalyzes carboxymethyl transfer from carboxy-S-adenosyl-L-methionine (Cx-SAM) to 5-hydroxyuridine (ho5U) to form 5-carboxymethoxyuridine (cmo5U) at position 34 in tRNAs. The chain is tRNA U34 carboxymethyltransferase from Yersinia pseudotuberculosis serotype O:3 (strain YPIII).